Reading from the N-terminus, the 495-residue chain is MSIHVKNNIHWVGQRDWEVRDFHGTEYKTHKGTSYNSYLIREGKNVLIDTVDHKFSREFVQNLAAEIDLATIDYVVINHAEEDHAGALTELMARIPGTPIYCTHNAIDSITGHHHHPEWNFHPVKTGDSLDIGNGKQLVFIETPMLHWPDSMMTYMTEDAVLFSNDAFGQHYCDEHLFNDEVDQTELMEQCQRYYANILTPFSPLVTAKIKEVLGFNLPVSMVATSHGIVWREDPTQIILKYLEWADHYQEDRITLFYDSMSNNTRMMADAIAQGIHEVDPGVAVKIYNVARHDKNEILTQVFRSKGILVGSSTMNNVMMPKVAGMLEEITGLRFRNKRASAFGSYGWTGGAVDRIQTRLMDAGFDISISLKAKWRPDGSALAECREHGRQLARQWALHPLDAPRPLATTQATPAPEMPAAVTAAPKATAAAAEWDDDQAMLCTVCQWVYDPAQGEPDQLVAPGTPWAQVPDSFLCPGCGIGKEVFEPCAVEACV.

The segment at 30 to 210 (HKGTSYNSYL…PFSPLVTAKI (181 aa)) is zinc metallo-hydrolase. Fe cation is bound by residues H79, E81, D83, H147, D166, and H227. Residues 254 to 393 (ITLFYDSMSN…ECREHGRQLA (140 aa)) form the Flavodoxin-like domain. Residues 260 to 264 (SMSNN) and 342 to 369 (AFGS…DISI) each bind FMN. Residues 438 to 489 (DQAMLCTVCQWVYDPAQGEPDQLVAPGTPWAQVPDSFLCPGCGIGKEVFEPC) enclose the Rubredoxin-like domain. 4 residues coordinate Fe cation: C443, C446, C476, and C479.

This sequence in the N-terminal section; belongs to the zinc metallo-hydrolase group 3 family. In terms of assembly, homotetramer. Fe cation serves as cofactor. Requires FMN as cofactor.

The protein localises to the cytoplasm. It participates in nitrogen metabolism; nitric oxide reduction. In terms of biological role, anaerobic nitric oxide reductase; uses NADH to detoxify nitric oxide (NO), protecting several 4Fe-4S NO-sensitive enzymes. Has at least 2 reductase partners, only one of which (NorW, flavorubredoxin reductase) has been identified. NO probably binds to the di-iron center; electrons enter from the NorW at rubredoxin and are transferred sequentially to the FMN center and the di-iron center. Also able to function as an aerobic oxygen reductase. The chain is Anaerobic nitric oxide reductase flavorubredoxin from Aeromonas hydrophila subsp. hydrophila (strain ATCC 7966 / DSM 30187 / BCRC 13018 / CCUG 14551 / JCM 1027 / KCTC 2358 / NCIMB 9240 / NCTC 8049).